A 213-amino-acid polypeptide reads, in one-letter code: Pyrrolidone-carboxylate peptidase (213 aa).

Active-site residues include Glu78, Cys141, and His165.

This sequence belongs to the peptidase C15 family. In terms of assembly, homotetramer.

The protein resides in the cytoplasm. It carries out the reaction Release of an N-terminal pyroglutamyl group from a polypeptide, the second amino acid generally not being Pro.. Functionally, removes 5-oxoproline from various penultimate amino acid residues except L-proline. The polypeptide is Pyrrolidone-carboxylate peptidase (Staphylococcus saprophyticus subsp. saprophyticus (strain ATCC 15305 / DSM 20229 / NCIMB 8711 / NCTC 7292 / S-41)).